A 489-amino-acid polypeptide reads, in one-letter code: Monocarboxylate transporter 2 (489 aa).

The Cytoplasmic portion of the chain corresponds to 1–21 (MPSESSVKATAAPPPFPLPPD). The helical transmembrane segment at 22-42 (GGWGWVVVCASFISIGFSYAF) threads the bilayer. The Extracellular segment spans residues 43–65 (PKAVTVFFNDIKDIFKTTSSQIA). The chain crosses the membrane as a helical span at residues 66–86 (WISSIMLAVMYAGGPISSVLV). Over 87-95 (NNYGSRPVV) the chain is Cytoplasmic. A helical transmembrane segment spans residues 96–116 (IVGGLLCCTGMILASFSSSVI). Over 117–121 (ELYLT) the chain is Extracellular. Residues 122–142 (VGFIGGLGLAFNLQPALTIIG) traverse the membrane as a helical segment. The Cytoplasmic segment spans residues 143–154 (KYFYRKRPLANG). The helical transmembrane segment at 155–175 (FAMAGSPVFLSTLAPFNQFLF) threads the bilayer. Topologically, residues 176 to 179 (NSYG) are extracellular. A helical transmembrane segment spans residues 180–200 (WKGSFLILGAIFLHSCVAGCL). At 201 to 250 (MRPVGPSPRAAKSKSKVGSRQDSSTKRLSKVSTAEKINRFLDFGLFTHRG) the chain is on the cytoplasmic side. Residues 206-227 (PSPRAAKSKSKVGSRQDSSTKR) are disordered. The helical transmembrane segment at 251 to 271 (FLIYLSGNVVLFLGMFAPIIF) threads the bilayer. Residues 272 to 286 (LAPYAKDKGVDDYNS) lie on the Extracellular side of the membrane. Residues 287 to 307 (AFLLSVMAFTDMFARPSVGLI) traverse the membrane as a helical segment. Topologically, residues 308 to 316 (ANTSLIRPR) are cytoplasmic. The helical transmembrane segment at 317 to 337 (IQYLFSVAIMFTGICHLLCPL) threads the bilayer. The Extracellular portion of the chain corresponds to 338–342 (AHSYT). Residues 343–363 (ALVVYVIFFGIGFGSISSLLF) form a helical membrane-spanning segment. At 364–377 (ECLMDQVGASRFSS) the chain is on the cytoplasmic side. Residues 378 to 398 (AVGLVTIVECCPVLFGPPLAG) traverse the membrane as a helical segment. Over 399 to 410 (KLLDITGQYKYL) the chain is Extracellular. A helical transmembrane segment spans residues 411–431 (YIASGIVVLSSGIYLLICNAI). At 432–489 (NYRLLEKERKREKARRKKSASQASKEMEALSRSKQDDVTVKVSNTHNPPSDRDKESSI) the chain is on the cytoplasmic side. The interval 441–489 (KREKARRKKSASQASKEMEALSRSKQDDVTVKVSNTHNPPSDRDKESSI) is disordered. 2 stretches are compositionally biased toward basic and acidic residues: residues 456-470 (KEME…DDVT) and 480-489 (PSDRDKESSI).

This sequence belongs to the major facilitator superfamily. Monocarboxylate porter (TC 2.A.1.13) family. Homodimer. Interacts with GRID2IP. Interacts with EMB; interaction mediates SLC16A7 targeting to the plasma membrane. Interacts with isoform 2 of BSG. Detected in brain and kidney (at protein level).

The protein resides in the cell membrane. The protein localises to the basolateral cell membrane. It is found in the cytoplasm. It carries out the reaction 3-methyl-2-oxobutanoate(out) + H(+)(out) = 3-methyl-2-oxobutanoate(in) + H(+)(in). The enzyme catalyses (S)-lactate(in) + H(+)(in) = (S)-lactate(out) + H(+)(out). It catalyses the reaction acetoacetate(out) + H(+)(out) = acetoacetate(in) + H(+)(in). The catalysed reaction is (R)-3-hydroxybutanoate(out) + H(+)(out) = (R)-3-hydroxybutanoate(in) + H(+)(in). It carries out the reaction 4-methyl-2-oxopentanoate(out) + H(+)(out) = 4-methyl-2-oxopentanoate(in) + H(+)(in). The enzyme catalyses pyruvate(out) + H(+)(out) = pyruvate(in) + H(+)(in). It catalyses the reaction (S)-3-hydroxybutanoate(out) + H(+)(out) = (S)-3-hydroxybutanoate(in) + H(+)(in). With respect to regulation, transport activity exhibits steep dependence on substrate concentration. Substrate concentration sensitivity of SLC16A7 arises from the strong inter-subunit cooperativity of the SLC16A7 dimer during transport. Inhibited by AR-C155858. Proton-coupled monocarboxylate symporter. Catalyzes the rapid transport across the plasma membrane of monocarboxylates such as L-lactate, pyruvate and ketone bodies, acetoacetate, beta-hydroxybutyrate and acetate. Dimerization is functionally required and both subunits work cooperatively in transporting substrate. This Rattus norvegicus (Rat) protein is Monocarboxylate transporter 2 (Slc16a7).